A 79-amino-acid chain; its full sequence is MKLTCVLIISVLFLTASQLITAVYSRDKQQYRAARLRDEMRNLKGARDCGEQGQGCYTRPCCPGLECRGGGTGGGVCQQ.

The signal sequence occupies residues 1-22 (MKLTCVLIISVLFLTASQLITA). A propeptide spanning residues 23 to 47 (VYSRDKQQYRAARLRDEMRNLKGAR) is cleaved from the precursor. 3 cysteine pairs are disulfide-bonded: Cys-49–Cys-62, Cys-56–Cys-67, and Cys-61–Cys-77. A 4-hydroxyproline mark is found at Pro-60 and Pro-63.

It belongs to the conotoxin O1 superfamily. Expressed by the venom duct.

Its subcellular location is the secreted. Functionally, ion channel inhibitor that inhibits the increase in intracellular calcium upon depolarization in DRG neurons. In vivo, both intraperitoneal and intracranial injections into mice induce hyperactivity. This chain is Conotoxin Tr6.2, found in Conus terebra (Sea snail).